A 186-amino-acid chain; its full sequence is Type 1 phosphatases regulator ypi-1 (186 aa).

Over residues 1–32 (MTSVAQRQAQPAQPSTSQTAAPTRTQTETSSP) the composition is skewed to polar residues. Residues 1-186 (MTSVAQRQAQ…SETQGPGGSK (186 aa)) are disordered. A compositionally biased stretch (low complexity) spans 82-94 (DSSSSSDSSSSSD). A compositionally biased stretch (basic and acidic residues) spans 122 to 137 (HDHDHDGREGGCNHDH). Residues 138–151 (GRGRKHGNKGKKTE) show a composition bias toward basic residues.

The protein belongs to the YPI1 family.

It is found in the nucleus. In terms of biological role, regulator of type 1 phosphatases which maintains protein phosphatase activity under strict control. In Neurospora crassa (strain ATCC 24698 / 74-OR23-1A / CBS 708.71 / DSM 1257 / FGSC 987), this protein is Type 1 phosphatases regulator ypi-1 (ypi-1).